The following is a 528-amino-acid chain: U3 small nucleolar RNA-associated protein 15 homolog (528 aa).

Ala2 carries the post-translational modification N-acetylalanine. WD repeat units lie at residues 36–75, 78–117, 120–159, 162–202, 204–242, 246–285, and 287–326; these read KEFG…PVKT, RFKD…PLRQ, GHTK…EILT, EHSD…NVLC, EHGQ…QLLV, NHHK…VVHS, and DYAA…KKES. Residue Lys249 forms a Glycyl lysine isopeptide (Lys-Gly) (interchain with G-Cter in SUMO2) linkage. Residues 508–528 form a disordered region; sequence AELPEEKTESPRQPSDTDKNS. A compositionally biased stretch (basic and acidic residues) spans 511–528; it reads PEEKTESPRQPSDTDKNS.

In terms of assembly, part of the small subunit (SSU) processome, composed of more than 70 proteins and the RNA chaperone small nucleolar RNA (snoRNA) U3. May be a component of the proposed t-UTP subcomplex of the ribosomal small subunit (SSU) processome containing at least UTP4, WDR43, HEATR1, UTP15, WDR75. Interacts directly with UTP4 and WDR43.

It is found in the nucleus. The protein localises to the nucleolus. In terms of biological role, ribosome biogenesis factor. Involved in nucleolar processing of pre-18S ribosomal RNA. Required for optimal pre-ribosomal RNA transcription by RNA polymerase I. Part of the small subunit (SSU) processome, first precursor of the small eukaryotic ribosomal subunit. During the assembly of the SSU processome in the nucleolus, many ribosome biogenesis factors, an RNA chaperone and ribosomal proteins associate with the nascent pre-rRNA and work in concert to generate RNA folding, modifications, rearrangements and cleavage as well as targeted degradation of pre-ribosomal RNA by the RNA exosome. This Rattus norvegicus (Rat) protein is U3 small nucleolar RNA-associated protein 15 homolog.